The sequence spans 424 residues: Calreticulin (424 aa).

Residues 1 to 19 form the signal peptide; it reads MRLLLCLIFLVFVFNFALS. A disulfide bond links C105 and C137. The an alpha-D-glucoside site is built by Y109, K111, Y128, and D135. Tandem repeats lie at residues 191-202, 210-221, 227-238, 246-256, 260-270, 274-284, and 288-298. The segment at 191-256 is 4 X 12 AA approximate repeats; that stretch reads IQAGNLADDW…EAVKPEDWNE (66 aa). Residues 260–298 are 3 X 11 AA approximate repeats; that stretch reads GEWEAPTIANPEYKGEWKAKKIPNPEYKGEWVHPLIDNP. Position 318 (E318) interacts with an alpha-D-glucoside. Basic and acidic residues predominate over residues 370-385; sequence RKKADEKLAAEKAAEK. The tract at residues 370–424 is disordered; it reads RKKADEKLAAEKAAEKEAEEADEEEEEVAEEDLVKTDDKKEEVKKSTKKVDHDEL. The segment covering 386-400 has biased composition (acidic residues); that stretch reads EAEEADEEEEEVAEE. Residues 401–424 are compositionally biased toward basic and acidic residues; the sequence is DLVKTDDKKEEVKKSTKKVDHDEL. Residues 421–424 carry the Prevents secretion from ER motif; the sequence is HDEL.

It belongs to the calreticulin family.

Its subcellular location is the endoplasmic reticulum lumen. Molecular calcium-binding chaperone promoting folding, oligomeric assembly and quality control in the ER via the calreticulin/calnexin cycle. This lectin may interact transiently with almost all of the monoglucosylated glycoproteins that are synthesized in the ER. The polypeptide is Calreticulin (crtA) (Dictyostelium discoideum (Social amoeba)).